The following is a 123-amino-acid chain: Large ribosomal subunit protein bL12 (123 aa).

Belongs to the bacterial ribosomal protein bL12 family. As to quaternary structure, homodimer. Part of the ribosomal stalk of the 50S ribosomal subunit. Forms a multimeric L10(L12)X complex, where L10 forms an elongated spine to which 2 to 4 L12 dimers bind in a sequential fashion. Binds GTP-bound translation factors.

Forms part of the ribosomal stalk which helps the ribosome interact with GTP-bound translation factors. Is thus essential for accurate translation. The protein is Large ribosomal subunit protein bL12 of Bartonella bacilliformis (strain ATCC 35685 / KC583 / Herrer 020/F12,63).